Here is a 316-residue protein sequence, read N- to C-terminus: GPI-specific phospholipase A2-like PGAP3 (316 aa).

Positions 1 to 19 (MFLAAAAFLLSAPASASQG) are cleaved as a signal peptide. At 20-97 (DKEPVYRDCV…GKWPFARFLC (78 aa)) the chain is on the lumenal side. N-linked (GlcNAc...) asparagine glycosylation is present at asparagine 36. A helical transmembrane segment spans residues 98 to 118 (FEEPASALASLLNGLACLLML). At 119 to 131 (LRYRSAVPCQSPM) the chain is on the cytoplasmic side. Residues 132–152 (YHTITAFSLVSLNAWFWSTVF) traverse the membrane as a helical segment. Over 153 to 165 (HTRDTYLTEKMDY) the chain is Lumenal. A helical transmembrane segment spans residues 166–186 (FCASAVILYSIYLCCVRTLGL). Residues 187 to 194 (RRPAISSM) lie on the Cytoplasmic side of the membrane. The chain crosses the membrane as a helical span at residues 195–215 (VGVLLILAFTSHVSYLTFVSF). The Lumenal segment spans residues 216 to 220 (DYGYN). A helical transmembrane segment spans residues 221–241 (MAANASIGIINLLWWLCWCWL). The Cytoplasmic segment spans residues 242 to 254 (NRRILPYWWRCGM). Residues 255 to 275 (VVLLLHGLALLELLDFPPLFW) form a helical membrane-spanning segment. The Lumenal portion of the chain corresponds to 276–278 (VLD). Residues 279–299 (AHAVWHLSTVPVHFLFYSFLI) form a helical membrane-spanning segment. Topologically, residues 300–316 (DDSLHLLNTEKPGVKLD) are cytoplasmic.

This sequence belongs to the PGAP3 family.

The protein resides in the golgi apparatus membrane. Involved in the fatty acid remodeling steps of GPI-anchor maturation where the unsaturated acyl chain at sn-2 of inositol phosphate is replaced by a saturated stearoyl chain. May catalyze the first step of the fatty acid remodeling, by removing the unsaturated acyl chain at sn-2 of inositol phosphate, generating a lyso-GPI intermediate. The fatty acid remodeling steps is critical for the integration of GPI-APs into lipid rafts. The sequence is that of GPI-specific phospholipase A2-like PGAP3 from Danio rerio (Zebrafish).